We begin with the raw amino-acid sequence, 329 residues long: Sex comb on midleg-like protein 1 (329 aa).

Phosphoserine is present on residues S138 and S238. Residues 138–157 (SPTLPVSRRENNSPSNLPRP) form a disordered region. An SAM domain is found at 258-325 (WSVEAVVLFL…YYIDRLKQGK (68 aa)).

Belongs to the SCM family.

The protein localises to the nucleus. Its function is as follows. Putative Polycomb group (PcG) protein. PcG proteins act by forming multiprotein complexes, which are required to maintain the transcriptionally repressive state of homeotic genes throughout development. May be involved in spermatogenesis during sexual maturation. The chain is Sex comb on midleg-like protein 1 (SCML1) from Pan troglodytes (Chimpanzee).